The sequence spans 295 residues: Probable protein phosphatase 2C 6 (295 aa).

The PPM-type phosphatase domain occupies 23–294; sequence QYAATHMQGW…DNMTCILIQF (272 aa). Positions 57, 58, 237, and 285 each coordinate Mn(2+).

It belongs to the PP2C family. Mg(2+) is required as a cofactor. It depends on Mn(2+) as a cofactor.

It localises to the membrane. The enzyme catalyses O-phospho-L-seryl-[protein] + H2O = L-seryl-[protein] + phosphate. It carries out the reaction O-phospho-L-threonyl-[protein] + H2O = L-threonyl-[protein] + phosphate. In terms of biological role, enzyme with a broad specificity. The sequence is that of Probable protein phosphatase 2C 6 from Paramecium tetraurelia.